The chain runs to 428 residues: UPF0597 protein PBPRB0240 (428 aa).

Belongs to the UPF0597 family.

The sequence is that of UPF0597 protein PBPRB0240 from Photobacterium profundum (strain SS9).